A 247-amino-acid polypeptide reads, in one-letter code: MQTQVLFEHPLNEKMRTWLRIEFLIQQLTVNLPIVDHAGALHFFRNVSELLDVFERGEVRTELLKELDRQQRKLQTWIGVPGVDQSRIEALIQQLKAAGSVLISAPRIGQFLREDRLIALVRQRLSIPGGCCSFDLPTLHIWLHLPQAQRDSQVETWIASLNPLTQALTMVLDLIRQSAPFRKQTSLNGFYQDNGGDADLLRLNLLLDSQLYPQISGHKSRFAIRFMPLDTENGQVPERLDFELACC.

The protein belongs to the ZapD family. In terms of assembly, interacts with FtsZ.

It is found in the cytoplasm. Functionally, cell division factor that enhances FtsZ-ring assembly. Directly interacts with FtsZ and promotes bundling of FtsZ protofilaments, with a reduction in FtsZ GTPase activity. The sequence is that of Cell division protein ZapD from Escherichia coli O139:H28 (strain E24377A / ETEC).